Here is a 102-residue protein sequence, read N- to C-terminus: Complement inhibitor RaCI3 (102 aa).

The N-terminal stretch at 1–24 (MAALNGLVLLLLTISAMFISECYS) is a signal peptide. Disulfide bonds link C37–C61, C42–C63, and C57–C78.

This sequence belongs to the RaCI family. Expressed in salivary glands.

The protein resides in the secreted. Its function is as follows. Complement inhibitor. Prevents complement-mediated C5 activation by binding to C5. Binds C5 at a different binding site than the other tick complement inhibitors OmCI and CirpT1, and the drug eculizumab. Inhibits complement in human and guinea pig but not in other species tested (rabbit, rat, mouse, and pig). This Dermacentor andersoni (Rocky mountain wood tick) protein is Complement inhibitor RaCI3.